Here is a 448-residue protein sequence, read N- to C-terminus: MPKSLENTNETPKSFFITTLGCPKNTVDSMAMHQSLLKEGLLPAAGPEASDFHLVNTCTFIQDATKETIQTILDSIDIKKQNKQKLVVVGCFAERAGKEISDDLPEVDLHFGTGKYDKAGEILRKNFPLEFKDLTEFNEDLLERLTTSKGIENYSKPYSYVKISDGCNRGCHFCIIPNLRGKYRDTDSNDVLEQTKLAVKAGSKEICLVSQDTVFYGKDTDKLMDLVRSVAAVEGLEILRLLYLYPDKKTEKLLDLYREIPKIAPYLESPLQHVSKSVLKSMNRTGDYEFFKSLFQKARDIRPDLEIRTSFILGFPGETMEDVEEIIRFVEDVKPEKVNLFPYSPQEGTKGATMDGQLKDKEIARRVNLVREAYLGTLKTIHQNRIGKIYPCVVDEVLDDGAIVRRLQDAPEIDEVVYVETKDLKLGQFGKVRVDSFYELDMSGTWVD.

Residues 13 to 128 enclose the MTTase N-terminal domain; that stretch reads KSFFITTLGC…AGEILRKNFP (116 aa). [4Fe-4S] cluster contacts are provided by Cys22, Cys58, Cys91, Cys167, Cys171, and Cys174. In terms of domain architecture, Radical SAM core spans 153–382; the sequence is NYSKPYSYVK…AYLGTLKTIH (230 aa). The 66-residue stretch at 383–448 folds into the TRAM domain; sequence QNRIGKIYPC…ELDMSGTWVD (66 aa).

This sequence belongs to the methylthiotransferase family. RimO subfamily. [4Fe-4S] cluster is required as a cofactor.

The protein localises to the cytoplasm. It carries out the reaction L-aspartate(89)-[ribosomal protein uS12]-hydrogen + (sulfur carrier)-SH + AH2 + 2 S-adenosyl-L-methionine = 3-methylsulfanyl-L-aspartate(89)-[ribosomal protein uS12]-hydrogen + (sulfur carrier)-H + 5'-deoxyadenosine + L-methionine + A + S-adenosyl-L-homocysteine + 2 H(+). In terms of biological role, catalyzes the methylthiolation of an aspartic acid residue of ribosomal protein uS12. The polypeptide is Ribosomal protein uS12 methylthiotransferase RimO (Leptospira biflexa serovar Patoc (strain Patoc 1 / Ames)).